The primary structure comprises 45 residues: Single-stranded DNA-binding protein (45 aa).

In terms of assembly, homodimer in the absence of DNA, monomer when binding DNA.

Functionally, binds preferentially to single-stranded DNA and therefore, destabilizes double-stranded DNA. It is involved in DNA replication, repair and recombination. Binds ss-DNA as the replication fork advances and stimulates the replisome processivity and accuracy. The chain is Single-stranded DNA-binding protein (32) from Enterobacteria phage RB3 (Bacteriophage RB3).